We begin with the raw amino-acid sequence, 337 residues long: Ribosomal RNA small subunit methyltransferase C (337 aa).

This sequence belongs to the methyltransferase superfamily. RsmC family. Monomer.

It localises to the cytoplasm. It catalyses the reaction guanosine(1207) in 16S rRNA + S-adenosyl-L-methionine = N(2)-methylguanosine(1207) in 16S rRNA + S-adenosyl-L-homocysteine + H(+). In terms of biological role, specifically methylates the guanine in position 1207 of 16S rRNA in the 30S particle. This is Ribosomal RNA small subunit methyltransferase C from Acinetobacter baumannii (strain ATCC 17978 / DSM 105126 / CIP 53.77 / LMG 1025 / NCDC KC755 / 5377).